The sequence spans 308 residues: MQLEFLGTGAGSPGKFRNVTSVALKLLDESNEVWLFDCGEATQHQILKTNIKPRKIDKIFITHLHGDHIFGLPGFLSSRSNQGGSEELTIFGPTGIKDFVMTSLRISESKLSYRIKFVEIAQEGVLFEDQNYIVNVAELDHRIKSYGFRVKEKDHPGELLVDKLKELAIPSGPIYGQIKQGKEVTLDDGRVINGQDFIGKPQPGRVVTVLGDTRQTPNIELLAKDADALVHESTFGKQEGSLARNYYHSTNIQAAKIAKQANARQLLLTHISARYTGKLSKQLESDAKEIFSNSKVVRDFDIIDIPLP.

Histidine 63, histidine 65, aspartate 67, histidine 68, histidine 141, aspartate 212, and histidine 270 together coordinate Zn(2+). Residue aspartate 67 is the Proton acceptor of the active site.

The protein belongs to the RNase Z family. In terms of assembly, homodimer. Requires Zn(2+) as cofactor.

The catalysed reaction is Endonucleolytic cleavage of RNA, removing extra 3' nucleotides from tRNA precursor, generating 3' termini of tRNAs. A 3'-hydroxy group is left at the tRNA terminus and a 5'-phosphoryl group is left at the trailer molecule.. In terms of biological role, zinc phosphodiesterase, which displays some tRNA 3'-processing endonuclease activity. Probably involved in tRNA maturation, by removing a 3'-trailer from precursor tRNA. This is Ribonuclease Z from Pediococcus pentosaceus (strain ATCC 25745 / CCUG 21536 / LMG 10740 / 183-1w).